Reading from the N-terminus, the 265-residue chain is Type III pantothenate kinase (265 aa).

An ATP-binding site is contributed by 6 to 13; the sequence is DVGNTHTV. 112-115 contributes to the substrate binding site; the sequence is GADR. Catalysis depends on D114, which acts as the Proton acceptor. D134 is a binding site for K(+). Position 137 (T137) interacts with ATP. Position 189 (T189) interacts with substrate.

Belongs to the type III pantothenate kinase family. Homodimer. NH4(+) is required as a cofactor. The cofactor is K(+).

It localises to the cytoplasm. The catalysed reaction is (R)-pantothenate + ATP = (R)-4'-phosphopantothenate + ADP + H(+). The protein operates within cofactor biosynthesis; coenzyme A biosynthesis; CoA from (R)-pantothenate: step 1/5. Functionally, catalyzes the phosphorylation of pantothenate (Pan), the first step in CoA biosynthesis. This Streptomyces griseus subsp. griseus (strain JCM 4626 / CBS 651.72 / NBRC 13350 / KCC S-0626 / ISP 5235) protein is Type III pantothenate kinase.